Consider the following 520-residue polypeptide: DNA-(apurinic or apyrimidinic site) endonuclease 2 (520 aa).

E59 lines the Mg(2+) pocket. The active site involves Y181. D222, N224, and D353 together coordinate Mg(2+). The active-site Proton donor/acceptor is D222. Residues C476, H478, C500, and C514 each contribute to the Zn(2+) site. The GRF-type zinc-finger motif lies at 476–520; it reads CRHGEESMLKTSKTSANPGRKFWICKRSRGDSNNTESSCGFFQWV.

The protein belongs to the DNA repair enzymes AP/ExoA family. Mg(2+) serves as cofactor. Requires Mn(2+) as cofactor.

Its subcellular location is the nucleus. The enzyme catalyses Exonucleolytic cleavage in the 3'- to 5'-direction to yield nucleoside 5'-phosphates.. In terms of biological role, DNA repair enzyme that cleaves apurinic/apyrimidinic (AP) sites and removes 3'-blocking groups present at single strand breaks of damaged DNA. The polypeptide is DNA-(apurinic or apyrimidinic site) endonuclease 2 (APN2) (Saccharomyces cerevisiae (strain ATCC 204508 / S288c) (Baker's yeast)).